Here is a 648-residue protein sequence, read N- to C-terminus: Threonine--tRNA ligase (648 aa).

Residues 1-61 enclose the TGS domain; that stretch reads MIKITFPNTS…NENASVKLYK (61 aa). The interval 243-542 is catalytic; that stretch reads DHRRIGKEME…MIEHTGGKFP (300 aa). Residues Cys-338, His-389, and His-519 each coordinate Zn(2+).

Belongs to the class-II aminoacyl-tRNA synthetase family. As to quaternary structure, homodimer. Zn(2+) serves as cofactor.

It is found in the cytoplasm. It carries out the reaction tRNA(Thr) + L-threonine + ATP = L-threonyl-tRNA(Thr) + AMP + diphosphate + H(+). In terms of biological role, catalyzes the attachment of threonine to tRNA(Thr) in a two-step reaction: L-threonine is first activated by ATP to form Thr-AMP and then transferred to the acceptor end of tRNA(Thr). Also edits incorrectly charged L-seryl-tRNA(Thr). The protein is Threonine--tRNA ligase of Azobacteroides pseudotrichonymphae genomovar. CFP2.